A 977-amino-acid polypeptide reads, in one-letter code: Kinesin-like protein KIN-14D (977 aa).

The span at 1-13 (MSSSNNAAAAAAS) shows a compositional bias: low complexity. The segment at 1 to 20 (MSSSNNAAAAAASPDPSRRR) is disordered. The Calponin-homology (CH) domain maps to 17-118 (SRRREDVVGW…CILALKDRFG (102 aa)). Positions 297-384 (KAEETQRIED…TKRRIELEEL (88 aa)) form a coiled coil. The Kinesin motor domain occupies 472 to 800 (NIRVYCRIRP…LKFAERVSGV (329 aa)). 556 to 563 (GQTGSGKT) contributes to the ATP binding site. Positions 812-847 (KEGKDVKELMDQLSLLKDTISKKDEEIDRLQLLNSS) form a coiled coil. The interval 852–977 (PTRQADSVLK…RNNSTLKRGP (126 aa)) is disordered. Polar residues-rich tracts occupy residues 861-879 (KHSSSSPGITSLGKGTSVG) and 956-977 (RKSSTSQATPLARNNSTLKRGP).

Belongs to the TRAFAC class myosin-kinesin ATPase superfamily. Kinesin family. KIN-14 subfamily.

This chain is Kinesin-like protein KIN-14D, found in Oryza sativa subsp. japonica (Rice).